We begin with the raw amino-acid sequence, 344 residues long: L-threonine 3-dehydrogenase (344 aa).

Residue Cys-38 coordinates Zn(2+). Residues Thr-40 and His-43 each act as charge relay system in the active site. The Zn(2+) site is built by His-63, Glu-64, Cys-93, Cys-96, Cys-99, and Cys-107. Residues Ile-175, Asp-195, Arg-200, Leu-263–Ile-265, and Ile-287–Tyr-288 contribute to the NAD(+) site.

It belongs to the zinc-containing alcohol dehydrogenase family. As to quaternary structure, homotetramer. Zn(2+) is required as a cofactor.

It localises to the cytoplasm. The catalysed reaction is L-threonine + NAD(+) = (2S)-2-amino-3-oxobutanoate + NADH + H(+). The protein operates within amino-acid degradation; L-threonine degradation via oxydo-reductase pathway; glycine from L-threonine: step 1/2. Catalyzes the NAD(+)-dependent oxidation of L-threonine to 2-amino-3-ketobutyrate. This Deinococcus deserti (strain DSM 17065 / CIP 109153 / LMG 22923 / VCD115) protein is L-threonine 3-dehydrogenase.